A 257-amino-acid chain; its full sequence is NAD-capped RNA hydrolase NudC (257 aa).

Residues Lys27 and Arg71 each coordinate substrate. Zn(2+)-binding residues include Cys100 and Cys103. Glu113 is a binding site for substrate. 2 residues coordinate Zn(2+): Cys118 and Cys121. Position 126 (Tyr126) interacts with substrate. The Nudix hydrolase domain occupies 127-251 (PQIAPCIIVG…IARRLIEDTI (125 aa)). The a divalent metal cation site is built by Ala160, Glu176, and Glu180. The Nudix box signature appears at 161–182 (GFVEVGETLEEAVVREVMEESN). Position 194–201 (194–201 (QPWPFPHS)) interacts with substrate. Residue Glu221 coordinates a divalent metal cation. Ala243 is a substrate binding site.

It belongs to the Nudix hydrolase family. NudC subfamily. Homodimer. Mg(2+) is required as a cofactor. Mn(2+) serves as cofactor. It depends on Zn(2+) as a cofactor.

The enzyme catalyses a 5'-end NAD(+)-phospho-ribonucleoside in mRNA + H2O = a 5'-end phospho-adenosine-phospho-ribonucleoside in mRNA + beta-nicotinamide D-ribonucleotide + 2 H(+). It catalyses the reaction NAD(+) + H2O = beta-nicotinamide D-ribonucleotide + AMP + 2 H(+). It carries out the reaction NADH + H2O = reduced beta-nicotinamide D-ribonucleotide + AMP + 2 H(+). MRNA decapping enzyme that specifically removes the nicotinamide adenine dinucleotide (NAD) cap from a subset of mRNAs by hydrolyzing the diphosphate linkage to produce nicotinamide mononucleotide (NMN) and 5' monophosphate mRNA. The NAD-cap is present at the 5'-end of some mRNAs and stabilizes RNA against 5'-processing. Has preference for mRNAs with a 5'-end purine. Catalyzes the hydrolysis of a broad range of dinucleotide pyrophosphates. The sequence is that of NAD-capped RNA hydrolase NudC from Photorhabdus laumondii subsp. laumondii (strain DSM 15139 / CIP 105565 / TT01) (Photorhabdus luminescens subsp. laumondii).